A 414-amino-acid chain; its full sequence is Serine/threonine transporter SstT (414 aa).

8 consecutive transmembrane segments (helical) span residues 16-36 (GSLVKQILVGLVLGILLAWIS), 46-66 (LGTLFVGALKAVAPVLVLMLV), 84-104 (ILFLYLLGTFSAALAAVVFSF), 143-163 (ALLNANYIGILVWAVGLGFAL), 180-200 (AVTFMVKLVIRFAPVGIFGLV), 219-239 (LVVLIGCMLLVALMVNPLLVF), 300-320 (MAGAAITITVLTLAAVHTLGV), and 332-352 (VVASLCACGASGVAGGSLLLI).

The protein belongs to the dicarboxylate/amino acid:cation symporter (DAACS) (TC 2.A.23) family.

It is found in the cell inner membrane. The catalysed reaction is L-serine(in) + Na(+)(in) = L-serine(out) + Na(+)(out). It carries out the reaction L-threonine(in) + Na(+)(in) = L-threonine(out) + Na(+)(out). Involved in the import of serine and threonine into the cell, with the concomitant import of sodium (symport system). In Salmonella heidelberg (strain SL476), this protein is Serine/threonine transporter SstT.